A 170-amino-acid polypeptide reads, in one-letter code: UPF0220 protein C8D2.02c (170 aa).

4 helical membrane passes run 23 to 43 (LGVYFAGIMFASAVWVFVDAA), 54 to 74 (LHITFIDWIPFLCSILGIVIV), 101 to 121 (ILFIGFALLAGGLGGSFTVFI), and 136 to 156 (MGSANIISNILFMISATALWI).

The protein belongs to the UPF0220 family.

The protein localises to the membrane. The protein is UPF0220 protein C8D2.02c of Schizosaccharomyces pombe (strain 972 / ATCC 24843) (Fission yeast).